A 224-amino-acid polypeptide reads, in one-letter code: Protein HLJ1 (224 aa).

One can recognise a J domain in the interval 18-87 (DKHEFYEILK…RSIYDRIGRD (70 aa)). The segment covering 84–93 (IGRDPDDRQM) has biased composition (basic and acidic residues). The disordered stretch occupies residues 84 to 107 (IGRDPDDRQMPSRGAASGFRGSAG). Position 109 is a phosphoserine (Ser-109). The interval 173–192 (NRGGSPFMRQQPRSRQQQQQ) is disordered. Residues 181–192 (RQQPRSRQQQQQ) are compositionally biased toward low complexity.

The polypeptide is Protein HLJ1 (HLJ1) (Saccharomyces cerevisiae (strain ATCC 204508 / S288c) (Baker's yeast)).